Consider the following 514-residue polypeptide: Respiratory nitrate reductase 2 beta chain (514 aa).

3 4Fe-4S ferredoxin-type domains span residues 7–35 (VGMV…GREG), 174–205 (TFMM…KREE), and 207–236 (GIVL…FNWK). Positions 16, 19, 22, 26, 183, 186, and 191 each coordinate [4Fe-4S] cluster. Residues C195, C216, and C222 each coordinate [3Fe-4S] cluster. Residues C226, C243, C246, C258, and C262 each contribute to the [4Fe-4S] cluster site.

In terms of assembly, dimer of heterotrimers each composed of an alpha, a beta and a gamma chain. Alpha and beta are catalytic chains; gamma chains are involved in binding the enzyme complex to the cytoplasmic membrane. It depends on [4Fe-4S] cluster as a cofactor. [3Fe-4S] cluster serves as cofactor.

Its subcellular location is the cell membrane. It carries out the reaction nitrate + a quinol = a quinone + nitrite + H2O. Functionally, this is a second nitrate reductase enzyme which can substitute for the NRA enzyme and allows E.coli to use nitrate as an electron acceptor during anaerobic growth. The beta chain is an electron transfer unit containing four cysteine clusters involved in the formation of iron-sulfur centers. Electrons are transferred from the gamma chain to the molybdenum cofactor of the alpha subunit. This Escherichia coli (strain K12) protein is Respiratory nitrate reductase 2 beta chain (narY).